The chain runs to 342 residues: MKIKVGILGASGYAGNELVRILLNHPKVEISYLGSSSSVGQNYQDLYPNTLLNLCFENKNLDELELDLLFLATPHEFSAKLLNENLLKKMKIIDLSADFRLKNPKDYELWYKFTHPNQELLQNAVYGLCELYKEEIKKASLVANPGCYTTCSILSLYPLFKEKIIDFSSVIIDAKSGVSGAGRSAKVENLFCEVNENIKAYNLALHRHTPEIEEHLSYAAKKKITLQFTPHLVSMQRGILISAYANLKEDLQEQDIRDIYTKYYQNNKFIRLLPPQSLPQTRWVKSSNFADINFSVDQRTKRVIVLGAIDNLIKGAAGQAVQNMNLMFDFDEDEGLKFFANL.

The active site involves C147.

This sequence belongs to the NAGSA dehydrogenase family. Type 1 subfamily.

It is found in the cytoplasm. It carries out the reaction N-acetyl-L-glutamate 5-semialdehyde + phosphate + NADP(+) = N-acetyl-L-glutamyl 5-phosphate + NADPH + H(+). The protein operates within amino-acid biosynthesis; L-arginine biosynthesis; N(2)-acetyl-L-ornithine from L-glutamate: step 3/4. In terms of biological role, catalyzes the NADPH-dependent reduction of N-acetyl-5-glutamyl phosphate to yield N-acetyl-L-glutamate 5-semialdehyde. The sequence is that of N-acetyl-gamma-glutamyl-phosphate reductase from Campylobacter jejuni subsp. jejuni serotype O:23/36 (strain 81-176).